A 124-amino-acid polypeptide reads, in one-letter code: Small ribosomal subunit protein eS8 (124 aa).

The segment covering 1-22 (MQYQGRSKRSKTGARLRPRSKK) has biased composition (basic residues). Disordered regions lie at residues 1–40 (MQYQGRSKRSKTGARLRPRSKKSKSELGREPTETTVGEPR) and 102–124 (AGTARVTSRPGQDGQVNATRVDE). The segment covering 23–32 (SKSELGREPT) has biased composition (basic and acidic residues). Over residues 106 to 124 (RVTSRPGQDGQVNATRVDE) the composition is skewed to polar residues.

It belongs to the eukaryotic ribosomal protein eS8 family. Part of the 30S ribosomal subunit.

The polypeptide is Small ribosomal subunit protein eS8 (Halobacterium salinarum (strain ATCC 29341 / DSM 671 / R1)).